A 64-amino-acid chain; its full sequence is Prokaryotic ubiquitin-like protein Pup (64 aa).

The tract at residues 1–38 (MAQEQTKRGGGGGEDDDPTGSTAAGQERREKLTEETDD) is disordered. The interval 21-58 (STAAGQERREKLTEETDDLLDEIDDVLEENAEDFVRAY) is ARC ATPase binding. The stretch at 23-52 (AAGQERREKLTEETDDLLDEIDDVLEENAE) forms a coiled coil. A Deamidated glutamine modification is found at Gln-64. Gln-64 participates in a covalent cross-link: Isoglutamyl lysine isopeptide (Gln-Lys) (interchain with K-? in acceptor proteins).

The protein belongs to the prokaryotic ubiquitin-like protein family. As to quaternary structure, strongly interacts with the proteasome-associated ATPase ARC through a hydrophobic interface; the interacting region of Pup lies in its C-terminal half. There is one Pup binding site per ARC hexamer ring. Post-translationally, is modified by deamidation of its C-terminal glutamine to glutamate by the deamidase Dop, a prerequisite to the subsequent pupylation process.

Its pathway is protein degradation; proteasomal Pup-dependent pathway. Its function is as follows. Protein modifier that is covalently attached to lysine residues of substrate proteins, thereby targeting them for proteasomal degradation. The tagging system is termed pupylation. This is Prokaryotic ubiquitin-like protein Pup from Mycolicibacterium gilvum (strain PYR-GCK) (Mycobacterium gilvum (strain PYR-GCK)).